The following is a 168-amino-acid chain: Dihydrofolate reductase (168 aa).

The DHFR domain occupies 1–164 (MIIGIWAEDE…YTFTIKKYEK (164 aa)). 5-7 (IWA) contacts substrate. Residues 6–7 (WA) and 14–19 (IGEADK) each bind NADP(+). Glu-27 contacts substrate. 43 to 46 (GRKT) provides a ligand contact to NADP(+). Residue Arg-58 coordinates substrate. Residues 63–66 (LTRD) and 99–104 (TGGAEI) each bind NADP(+). Thr-118 lines the substrate pocket.

Belongs to the dihydrofolate reductase family.

It carries out the reaction (6S)-5,6,7,8-tetrahydrofolate + NADP(+) = 7,8-dihydrofolate + NADPH + H(+). It functions in the pathway cofactor biosynthesis; tetrahydrofolate biosynthesis; 5,6,7,8-tetrahydrofolate from 7,8-dihydrofolate: step 1/1. Functionally, key enzyme in folate metabolism. Catalyzes an essential reaction for de novo glycine and purine synthesis, and for DNA precursor synthesis. The chain is Dihydrofolate reductase (folA) from Lactococcus lactis subsp. lactis (strain IL1403) (Streptococcus lactis).